Reading from the N-terminus, the 351-residue chain is Glycerol-3-phosphate dehydrogenase [NAD(P)+] (351 aa).

The NADPH site is built by serine 12, tryptophan 13, histidine 33, and lysine 114. Residues lysine 114, glycine 145, and serine 147 each contribute to the sn-glycerol 3-phosphate site. Alanine 149 is a binding site for NADPH. Sn-glycerol 3-phosphate-binding residues include lysine 200, aspartate 253, serine 263, arginine 264, and asparagine 265. Catalysis depends on lysine 200, which acts as the Proton acceptor. Residue arginine 264 coordinates NADPH. Valine 288 and glutamate 290 together coordinate NADPH.

Belongs to the NAD-dependent glycerol-3-phosphate dehydrogenase family.

It localises to the cytoplasm. The enzyme catalyses sn-glycerol 3-phosphate + NAD(+) = dihydroxyacetone phosphate + NADH + H(+). The catalysed reaction is sn-glycerol 3-phosphate + NADP(+) = dihydroxyacetone phosphate + NADPH + H(+). It functions in the pathway membrane lipid metabolism; glycerophospholipid metabolism. Catalyzes the reduction of the glycolytic intermediate dihydroxyacetone phosphate (DHAP) to sn-glycerol 3-phosphate (G3P), the key precursor for phospholipid synthesis. The polypeptide is Glycerol-3-phosphate dehydrogenase [NAD(P)+] (Lacticaseibacillus casei (strain BL23) (Lactobacillus casei)).